A 1024-amino-acid chain; its full sequence is Multidrug resistance protein MdtC (1024 aa).

The next 12 membrane-spanning stretches (helical) occupy residues 12–32 (VATT…FSLL), 333–353 (EVER…FIFL), 360–380 (LIPA…MYLC), 387–407 (LSLM…IVVL), 435–455 (VLSM…MAGL), 469–489 (VAIG…CAWL), 528–548 (WVMV…ISIP), 853–873 (LWLI…LYES), 875–895 (VHPL…LLAL), 897–917 (LFDA…IGIV), 953–973 (PIIM…LSSG), and 984–1004 (ITIV…TPVI).

Belongs to the resistance-nodulation-cell division (RND) (TC 2.A.6) family. MdtC subfamily. As to quaternary structure, part of a tripartite efflux system composed of MdtA, MdtB and MdtC. MdtC forms a heteromultimer with MdtB.

Its subcellular location is the cell inner membrane. This Yersinia pseudotuberculosis serotype IB (strain PB1/+) protein is Multidrug resistance protein MdtC.